Reading from the N-terminus, the 334-residue chain is Putative B3 domain-containing protein At5g66980 (334 aa).

2 DNA-binding regions (TF-B3) span residues 8–105 and 218–317; these read LQFF…FAND and HPHF…VSGR.

It localises to the nucleus. The chain is Putative B3 domain-containing protein At5g66980 from Arabidopsis thaliana (Mouse-ear cress).